The following is a 68-amino-acid chain: U4-agatoxin-Ao1a (68 aa).

Residues 1–25 (MKKSTVIVLSLAAFVLLSVMQFSAA) form the signal peptide. Positions 26–36 (EDIKMEVEEQR) are excised as a propeptide. Disulfide bonds link C39/C52, C46/C57, C51/C66, and C59/C64.

This sequence belongs to the neurotoxin 33 family. In terms of tissue distribution, expressed by the venom gland.

It is found in the secreted. In Agelena orientalis (Funnel-web spider), this protein is U4-agatoxin-Ao1a.